Reading from the N-terminus, the 390-residue chain is Protein AC109 (390 aa).

Its subcellular location is the host cytoplasm. It localises to the host nucleus. In terms of biological role, plays a role in the transport of the budded virion (BV) to the host nucleus and for occlusion of viral progeny. The sequence is that of Protein AC109 (ORF109) from Lepidoptera (butterflies and moths).